The following is a 71-amino-acid chain: Small ribosomal subunit protein bS21 (71 aa).

This sequence belongs to the bacterial ribosomal protein bS21 family.

In Acinetobacter baylyi (strain ATCC 33305 / BD413 / ADP1), this protein is Small ribosomal subunit protein bS21.